The chain runs to 297 residues: Alpha-tubulin N-acetyltransferase 1 (297 aa).

Positions 1-186 (MEFDFDVHKI…NNFVVFDGFF (186 aa)) constitute an N-acetyltransferase domain. Acetyl-CoA-binding positions include 120 to 133 (FYIH…GFGK) and 156 to 165 (SEKFLSFLRK). Positions 269–297 (LHRTANSEQEDHSQRRRTSSLNRPQSIHH) are disordered. Residues 287–297 (SSLNRPQSIHH) show a composition bias toward polar residues.

The protein belongs to the acetyltransferase ATAT1 family.

Its subcellular location is the cytoplasm. It is found in the membrane. It localises to the clathrin-coated pit. The protein localises to the cell junction. The protein resides in the focal adhesion. Its subcellular location is the cell projection. It is found in the axon. It localises to the cytoskeleton. The protein localises to the spindle. It catalyses the reaction L-lysyl-[alpha-tubulin] + acetyl-CoA = N(6)-acetyl-L-lysyl-[alpha-tubulin] + CoA + H(+). Its function is as follows. Specifically acetylates 'Lys-40' in alpha-tubulin on the lumenal side of microtubules. Promotes microtubule destabilization and accelerates microtubule dynamics; this activity may be independent of acetylation activity. Acetylates alpha-tubulin with a slow enzymatic rate, due to a catalytic site that is not optimized for acetyl transfer. Enters the microtubule through each end and diffuses quickly throughout the lumen of microtubules. Acetylates only long/old microtubules because of its slow acetylation rate since it does not have time to act on dynamically unstable microtubules before the enzyme is released. May be involved in neuron development. The protein is Alpha-tubulin N-acetyltransferase 1 of Xenopus tropicalis (Western clawed frog).